The following is a 636-amino-acid chain: DNA primase (636 aa).

The segment at 44-68 (CPFHDEKTPSFHVRPNHGHFHCFGC) adopts a CHC2-type zinc-finger fold. One can recognise a Toprim domain in the interval 266–352 (HQAVVVEGYT…SGQSFVAVAA (87 aa)). The Mg(2+) site is built by Glu272, Asp323, and Asp325. The segment covering 443-459 (REEAKGGGRKDNNRRGQ) has biased composition (basic and acidic residues). The interval 443-481 (REEAKGGGRKDNNRRGQETAARPKPPPVQRPDPTDPTLW) is disordered.

Belongs to the DnaG primase family. Monomer. Interacts with DnaB. Zn(2+) is required as a cofactor. Requires Mg(2+) as cofactor.

The enzyme catalyses ssDNA + n NTP = ssDNA/pppN(pN)n-1 hybrid + (n-1) diphosphate.. In terms of biological role, RNA polymerase that catalyzes the synthesis of short RNA molecules used as primers for DNA polymerase during DNA replication. In Mycolicibacterium smegmatis (strain ATCC 700084 / mc(2)155) (Mycobacterium smegmatis), this protein is DNA primase.